Here is a 185-residue protein sequence, read N- to C-terminus: Ribosome-recycling factor (185 aa).

Belongs to the RRF family.

Its subcellular location is the cytoplasm. Its function is as follows. Responsible for the release of ribosomes from messenger RNA at the termination of protein biosynthesis. May increase the efficiency of translation by recycling ribosomes from one round of translation to another. The protein is Ribosome-recycling factor of Campylobacter jejuni subsp. jejuni serotype O:23/36 (strain 81-176).